A 249-amino-acid polypeptide reads, in one-letter code: NAD kinase (249 aa).

Asp49 acts as the Proton acceptor in catalysis. NAD(+)-binding positions include 49-50, Arg54, 115-116, Lys126, Arg143, Asp145, Ile153, 156-161, Ala180, and Gln211; these read DG, NE, and TGYAFS.

It belongs to the NAD kinase family. Homotetramer. A divalent metal cation is required as a cofactor.

It is found in the cytoplasm. It catalyses the reaction NAD(+) + ATP = ADP + NADP(+) + H(+). Functionally, involved in the regulation of the intracellular balance between NAD(H) and NADP(H), and is a key enzyme in the biosynthesis of NADP. Catalyzes specifically the phosphorylation on 2'-hydroxyl of the adenosine moiety of NAD to yield NADP. This is NAD kinase from Archaeoglobus fulgidus (strain ATCC 49558 / DSM 4304 / JCM 9628 / NBRC 100126 / VC-16).